A 235-amino-acid chain; its full sequence is Pyridoxine 5'-phosphate synthase (235 aa).

N6 contributes to the 3-amino-2-oxopropyl phosphate binding site. 8 to 9 (DH) provides a ligand contact to 1-deoxy-D-xylulose 5-phosphate. 3-amino-2-oxopropyl phosphate is bound at residue R17. The Proton acceptor role is filled by H42. Positions 44 and 49 each coordinate 1-deoxy-D-xylulose 5-phosphate. E69 functions as the Proton acceptor in the catalytic mechanism. Position 99 (T99) interacts with 1-deoxy-D-xylulose 5-phosphate. H188 (proton donor) is an active-site residue. Residues G189 and 210–211 (GH) contribute to the 3-amino-2-oxopropyl phosphate site.

The protein belongs to the PNP synthase family. In terms of assembly, homooctamer; tetramer of dimers.

It localises to the cytoplasm. The catalysed reaction is 3-amino-2-oxopropyl phosphate + 1-deoxy-D-xylulose 5-phosphate = pyridoxine 5'-phosphate + phosphate + 2 H2O + H(+). It participates in cofactor biosynthesis; pyridoxine 5'-phosphate biosynthesis; pyridoxine 5'-phosphate from D-erythrose 4-phosphate: step 5/5. Catalyzes the complicated ring closure reaction between the two acyclic compounds 1-deoxy-D-xylulose-5-phosphate (DXP) and 3-amino-2-oxopropyl phosphate (1-amino-acetone-3-phosphate or AAP) to form pyridoxine 5'-phosphate (PNP) and inorganic phosphate. This Wolbachia pipientis subsp. Culex pipiens (strain wPip) protein is Pyridoxine 5'-phosphate synthase.